Here is a 245-residue protein sequence, read N- to C-terminus: Short-chain dehydrogenase/reductase pyiH (245 aa).

4 residues coordinate NADP(+): Ile18, Arg42, Asp68, and Asn95. The active-site Proton donor is Ser150.

It belongs to the short-chain dehydrogenases/reductases (SDR) family.

It functions in the pathway mycotoxin biosynthesis. Its function is as follows. Short-chain dehydrogenase/reductase; part of the gene cluster that mediates the biosynthesis of the mycotoxin pyrichalasin H, a tyrosine-derived cytochalasan that inhibits the growth of rice seedlings, but also inhibits lymphocyte capping and actin polymerization and alters cell morphology. Pyrichalasin H is indicated as the responsible agent for the genus-specific pathogenicity of M.grisea toward crabgrass. The first step in the pathway is catalyzed by the O-methyltransferase pyiA which methylates free tyrosine to generate the precursor O-methyltyrosine. The hybrid PKS-NRPS pyiS, assisted by the enoyl reductase pyiC, are responsible for fusion of the O-methyltyrosine precursor and the polyketide backbone. The polyketide synthase module (PKS) of pyiS is responsible for the synthesis of the polyketide backbone and the downstream nonribosomal peptide synthetase (NRPS) amidates the carboxyl end of the polyketide with the O-methyltyrosine precursor. As the NRPS A-domain demonstrates substrate tolerance, pyiS can also use phenylalanine, tyrosine and even para-chlorophenylalanine as amino acid precursor, which leads to the production of novel cytochalasans, including halogenated cytochalasans. Because pyiS lacks a designated enoylreductase (ER) domain, the required activity is provided the enoyl reductase pyiC. Reduction by the hydrolyase pyiE leads to 1,5-dihydropyrrolone, which is substrate for dehydration and intra-molecular Diels-Alder cyclization by the Diels-Alderase pyiF to yield the required isoindolone-fused macrocycle. The tailoring cytochrome P450 monooxygenases piyD and piyG catalyze the hydroxylation at C-18 and C-7, respectivily, whereas the short-chain dehydrogenase/reductase pyiH reduces the carbonyl at C-21 in preparation for the transfer of an acetyl group by the acetyltransferase pyiB. These 3 reactions whose order is not clear yet, lead to the production of O-methylpyrichalasin J, a deacetylated pyrichalasin H. Finally, pyiB to converts O-methylpyrichalasin J into the final product pyrichalasin H via acetylation of C-21. The protein is Short-chain dehydrogenase/reductase pyiH of Pyricularia grisea (Crabgrass-specific blast fungus).